The chain runs to 42 residues: Photosystem I reaction center subunit IX (42 aa).

Residues 7–27 traverse the membrane as a helical segment; it reads YLSTAPVLAALSLGFLAGLLI.

The protein belongs to the PsaJ family.

The protein resides in the plastid. It localises to the chloroplast thylakoid membrane. Functionally, may help in the organization of the PsaE and PsaF subunits. This Cryptomeria japonica (Japanese cedar) protein is Photosystem I reaction center subunit IX.